The following is a 148-amino-acid chain: uncharacterized protein (148 aa).

An ABC transmembrane type-1 domain is found at 25-148 (LSIGLIFSLI…YSITNIFIYN (124 aa)). 3 helical membrane-spanning segments follow: residues 26 to 46 (SIGL…PLII), 60 to 80 (IVII…STYI), and 127 to 147 (ITRV…IFIY).

Its subcellular location is the cell membrane. This is an uncharacterized protein from Staphylococcus epidermidis.